A 180-amino-acid polypeptide reads, in one-letter code: ATP synthase subunit delta (180 aa).

It belongs to the ATPase delta chain family. In terms of assembly, F-type ATPases have 2 components, F(1) - the catalytic core - and F(0) - the membrane proton channel. F(1) has five subunits: alpha(3), beta(3), gamma(1), delta(1), epsilon(1). F(0) has three main subunits: a(1), b(2) and c(10-14). The alpha and beta chains form an alternating ring which encloses part of the gamma chain. F(1) is attached to F(0) by a central stalk formed by the gamma and epsilon chains, while a peripheral stalk is formed by the delta and b chains.

The protein localises to the cell inner membrane. In terms of biological role, f(1)F(0) ATP synthase produces ATP from ADP in the presence of a proton or sodium gradient. F-type ATPases consist of two structural domains, F(1) containing the extramembraneous catalytic core and F(0) containing the membrane proton channel, linked together by a central stalk and a peripheral stalk. During catalysis, ATP synthesis in the catalytic domain of F(1) is coupled via a rotary mechanism of the central stalk subunits to proton translocation. Its function is as follows. This protein is part of the stalk that links CF(0) to CF(1). It either transmits conformational changes from CF(0) to CF(1) or is implicated in proton conduction. This chain is ATP synthase subunit delta, found in Geotalea uraniireducens (strain Rf4) (Geobacter uraniireducens).